The chain runs to 227 residues: Acyl-protein thioesterase 1 (227 aa).

Active-site charge relay system residues include Ser-119, Asp-173, and His-207.

The protein belongs to the AB hydrolase superfamily. AB hydrolase 2 family.

It localises to the cytoplasm. Its subcellular location is the nucleus. It carries out the reaction S-hexadecanoyl-L-cysteinyl-[protein] + H2O = L-cysteinyl-[protein] + hexadecanoate + H(+). In terms of biological role, hydrolyzes fatty acids from S-acylated cysteine residues in proteins with a strong preference for palmitoylated G-alpha proteins over other acyl substrates. Mediates the deacylation of G-alpha proteins such as GPA1 in vivo, but has weak or no activity toward palmitoylated Ras proteins. Has weak lysophospholipase activity in vitro; however such activity may not exist in vivo. This chain is Acyl-protein thioesterase 1, found in Saccharomyces cerevisiae (strain ATCC 204508 / S288c) (Baker's yeast).